A 31-amino-acid polypeptide reads, in one-letter code: Cycloviolacin-O23 (31 aa).

A cross-link (cyclopeptide (Gly-Asn)) is located at residues 1 to 31 (GLPTCGETCFGGTCNTPGCTCDSSWPICTHN). 3 cysteine pairs are disulfide-bonded: Cys5/Cys19, Cys9/Cys21, and Cys14/Cys28.

In terms of processing, this is a cyclic peptide. In terms of tissue distribution, expressed in leaves but not in petals, petioles, roots and runners (at protein level).

Its function is as follows. Probably participates in a plant defense mechanism. The chain is Cycloviolacin-O23 from Viola odorata (Sweet violet).